The chain runs to 446 residues: Probable 1,4-beta-D-glucan cellobiohydrolase A (446 aa).

Residues 1 to 17 (MYQRALLFSALLSVSRA) form the signal peptide. Asn81 carries N-linked (GlcNAc...) asparagine glycosylation. Glu226 (nucleophile) is an active-site residue. The active-site Proton donor is Glu231. N-linked (GlcNAc...) asparagine glycosylation is found at Asn284 and Asn333. Residues 399–420 (TDADPSQPGVARGTCEQGAGDP) are disordered.

Belongs to the glycosyl hydrolase 7 (cellulase C) family.

Its subcellular location is the secreted. It catalyses the reaction Hydrolysis of (1-&gt;4)-beta-D-glucosidic linkages in cellulose and cellotetraose, releasing cellobiose from the non-reducing ends of the chains.. The biological conversion of cellulose to glucose generally requires three types of hydrolytic enzymes: (1) Endoglucanases which cut internal beta-1,4-glucosidic bonds; (2) Exocellobiohydrolases that cut the disaccharide cellobiose from the non-reducing end of the cellulose polymer chain; (3) Beta-1,4-glucosidases which hydrolyze the cellobiose and other short cello-oligosaccharides to glucose. In Emericella nidulans (strain FGSC A4 / ATCC 38163 / CBS 112.46 / NRRL 194 / M139) (Aspergillus nidulans), this protein is Probable 1,4-beta-D-glucan cellobiohydrolase A (cbhA).